The following is a 798-amino-acid chain: Cadherin-20 (798 aa).

Positions 1-35 are cleaved as a signal peptide; that stretch reads MWTSGRMSNAKNLFGLGVSLYFWGLMDLTTTVLSG. Residues 36–58 constitute a propeptide that is removed on maturation; it reads SARPLTEGPEDNLSDKLHQRMKR. N-linked (GlcNAc...) asparagine glycosylation occurs at asparagine 47. Over 59-618 the chain is Extracellular; the sequence is SWVWNQFFVL…AYVLPVSLSR (560 aa). Cadherin domains follow at residues 60 to 164, 165 to 273, 274 to 392, 389 to 493, and 493 to 615; these read WVWN…EPKF, LDGP…PPRF, PQKH…EPSF, EPSF…APEF, and FARF…LPVS. Positions 88–90 match the Cell attachment site motif; it reads RGD. An N-linked (GlcNAc...) asparagine glycan is attached at asparagine 260. N-linked (GlcNAc...) asparagine glycosylation is found at asparagine 419, asparagine 460, and asparagine 541. Residues 619–639 form a helical membrane-spanning segment; it reads GALIAILACIFVLLVLVLLIL. Over 640–798 the chain is Cytoplasmic; sequence SMRRQRKQPY…GATDSSGALW (159 aa).

Detected in embryonic spinal cord, in the brachial and lumbar section of motor neurons (at protein level). Detected in ventro-lateral portion of embryonic spinal cord, in the brachial and lumbar section of embryonic motor neurons. Detected in embryonic adductor motor neurons and embryonic dorsal root ganglion. Detected in the caudal half of newly generated somites and in presomitic mesoderm.

The protein localises to the cell membrane. In terms of biological role, cadherins are calcium-dependent cell adhesion proteins. They preferentially interact with themselves in a homophilic manner in connecting cells; cadherins may thus contribute to the sorting of heterogeneous cell types. The sequence is that of Cadherin-20 (CDH20) from Gallus gallus (Chicken).